The sequence spans 266 residues: Undecaprenyl-diphosphatase 1 (266 aa).

The next 8 helical transmembrane spans lie at 1–21 (MDTF…FLPI), 39–59 (QGLS…VIYF), 87–107 (WWII…KDFI), 114–134 (TGVI…ADKM), 149–169 (ALLI…RSGA), 183–203 (AAAR…AILV), 218–238 (ALTL…HYFL), and 246–266 (MTPF…FIFL).

Belongs to the UppP family.

The protein localises to the cell inner membrane. The enzyme catalyses di-trans,octa-cis-undecaprenyl diphosphate + H2O = di-trans,octa-cis-undecaprenyl phosphate + phosphate + H(+). In terms of biological role, catalyzes the dephosphorylation of undecaprenyl diphosphate (UPP). Confers resistance to bacitracin. The chain is Undecaprenyl-diphosphatase 1 from Shewanella oneidensis (strain ATCC 700550 / JCM 31522 / CIP 106686 / LMG 19005 / NCIMB 14063 / MR-1).